We begin with the raw amino-acid sequence, 192 residues long: Imidazole glycerol phosphate synthase subunit HisH (192 aa).

The Glutamine amidotransferase type-1 domain occupies 1 to 192 (MIAIIDYGLG…QALKGGFIND (192 aa)). The active-site Nucleophile is the C77. Residues H169 and E171 contribute to the active site.

Heterodimer of HisH and HisF.

The protein localises to the cytoplasm. It catalyses the reaction 5-[(5-phospho-1-deoxy-D-ribulos-1-ylimino)methylamino]-1-(5-phospho-beta-D-ribosyl)imidazole-4-carboxamide + L-glutamine = D-erythro-1-(imidazol-4-yl)glycerol 3-phosphate + 5-amino-1-(5-phospho-beta-D-ribosyl)imidazole-4-carboxamide + L-glutamate + H(+). The catalysed reaction is L-glutamine + H2O = L-glutamate + NH4(+). The protein operates within amino-acid biosynthesis; L-histidine biosynthesis; L-histidine from 5-phospho-alpha-D-ribose 1-diphosphate: step 5/9. In terms of biological role, IGPS catalyzes the conversion of PRFAR and glutamine to IGP, AICAR and glutamate. The HisH subunit catalyzes the hydrolysis of glutamine to glutamate and ammonia as part of the synthesis of IGP and AICAR. The resulting ammonia molecule is channeled to the active site of HisF. This chain is Imidazole glycerol phosphate synthase subunit HisH, found in Staphylococcus epidermidis (strain ATCC 35984 / DSM 28319 / BCRC 17069 / CCUG 31568 / BM 3577 / RP62A).